The chain runs to 384 residues: Putative aminohydrolase MTH_994 (384 aa).

Zn(2+)-binding residues include H60, H62, H207, and D291.

This sequence belongs to the metallo-dependent hydrolases superfamily. ATZ/TRZ family.

This Methanothermobacter thermautotrophicus (strain ATCC 29096 / DSM 1053 / JCM 10044 / NBRC 100330 / Delta H) (Methanobacterium thermoautotrophicum) protein is Putative aminohydrolase MTH_994.